We begin with the raw amino-acid sequence, 225 residues long: uncharacterized protein (225 aa).

The helical transmembrane segment at 12 to 32 threads the bilayer; the sequence is AGFMMIFVFVIASFLLVLLFF.

The protein resides in the cell membrane. This is an uncharacterized protein from Bacillus subtilis (strain 168).